The primary structure comprises 520 residues: 6-phosphofructo-2-kinase/fructose-2,6-bisphosphatase 3 (520 aa).

A 6-phosphofructo-2-kinase region spans residues 1–245 (MPLELTQSRV…VYYLMNIHVQ (245 aa)). 42–50 (GLPARGKTY) is an ATP binding site. Beta-D-fructose 6-phosphate-binding residues include R75 and R99. D125 is an active-site residue. Residues T127 and R133 each contribute to the beta-D-fructose 6-phosphate site. C155 is an active-site residue. 164–169 (NIMEVK) is a binding site for ATP. 3 residues coordinate beta-D-fructose 6-phosphate: K169, R190, and Y194. The tract at residues 246–520 (PRTIYLCRHG…RSSADSSRKH (275 aa)) is fructose-2,6-bisphosphatase. R253 serves as a coordination point for beta-D-fructose 2,6-bisphosphate. The active-site Tele-phosphohistidine intermediate is H254. Residues N260 and G266 each coordinate beta-D-fructose 2,6-bisphosphate. E323 acts as the Proton donor/acceptor in catalysis. Y334, R348, K352, Y363, Q389, and R393 together coordinate beta-D-fructose 2,6-bisphosphate. 345–348 (YALR) serves as a coordination point for ATP. ATP is bound by residues 389 to 393 (QAVLR) and Y425. Positions 443–520 (RERSEDAKKG…RSSADSSRKH (78 aa)) are disordered. Residue S461 is modified to Phosphoserine; by AMPK. T463 carries the phosphothreonine modification. S467 is subject to Phosphoserine. T471 carries the post-translational modification Phosphothreonine; by PKC. Residues 502-520 (LPGQNMKGSRSSADSSRKH) show a composition bias toward polar residues.

The protein in the C-terminal section; belongs to the phosphoglycerate mutase family. As to quaternary structure, homodimer. Forms a heterodimer with PFKFB2. In terms of processing, phosphorylation by AMPK stimulates activity. Ubiquitous.

The enzyme catalyses beta-D-fructose 2,6-bisphosphate + H2O = beta-D-fructose 6-phosphate + phosphate. The catalysed reaction is beta-D-fructose 6-phosphate + ATP = beta-D-fructose 2,6-bisphosphate + ADP + H(+). Functionally, catalyzes both the synthesis and degradation of fructose 2,6-bisphosphate. This is 6-phosphofructo-2-kinase/fructose-2,6-bisphosphatase 3 (PFKFB3) from Homo sapiens (Human).